We begin with the raw amino-acid sequence, 408 residues long: Phosphoglycerate kinase (408 aa).

Residues 24 to 26 (DLN), arginine 39, 62 to 65 (HLGR), arginine 121, and arginine 161 each bind substrate. Residues lysine 211, glycine 307, glutamate 338, and 364 to 367 (GGDS) each bind ATP.

It belongs to the phosphoglycerate kinase family. As to quaternary structure, monomer.

It localises to the cytoplasm. The catalysed reaction is (2R)-3-phosphoglycerate + ATP = (2R)-3-phospho-glyceroyl phosphate + ADP. Its pathway is carbohydrate degradation; glycolysis; pyruvate from D-glyceraldehyde 3-phosphate: step 2/5. In Arthrobacter sp. (strain FB24), this protein is Phosphoglycerate kinase.